The following is a 1370-amino-acid chain: MRNIGVFSVILFSFLAISLKAQNSNFVFKSFTPIDGLSQSSVIDIEQDKIGQLWVGTRDGLNKFDGHTFKIYRNNPEDSTSISNSDILSIAEDRSGMLWVGTYNGLNKYNPETNRFQRYFHSNESTSLPSNTIWKLKEIKNEIWIGTLNGLAIYNKKTEGFTSVLSDEKNKSSLPGLFVTSIFESTNGDIWVGTDNGLCKLISRNAEQISFQTINYKKNKDIRPYKLHVKDIIEDKNHNLWVATKNSGLYMIKANTTTLISYQNTPDFKDVNLDIRAINFDKHNNLWIGTYSGIFILKSDGDVQHIGKKSSDYSGLNKIKTIFTDKHGSVWAGSYYGGLHLWDESNSNFINFNQNSKSLRLSYNVVGSIAASKDSLVFFGTEGGGITQYNFKSDESIYINSENTKGFLSDNIKSLKIVDDALWVGSFNTLPFLYDYNTKTVRTNNFPDELKNIFIESSVYFTEKENDSIIWFGTFGSGAIRYNTETKNYIQLTTEPEGLYSLTNNRVRTLFIDSKQRVWLGTQSGLNVMALSNIDKEKIPIKQFFFDSELISGVDILTVFEDSNRNIWVGTKASGFYVYKGETFEKVDIQHNGVKVNSVHSVLEDAYKNLWLSSNQGLVKYNLNTKNITIYDQTDGLISNEYNDNSSLNFNNDTFYFGGPAGVVSFQPDQISLNNYNPQVILTDFRIKNESVPIGGDQAILTKDIAFTKAIDLDYNNANFSIRFAIPNFINGSNNQYAYRMLGLEEAWNVTSNTEANYIIQQAGNYTFEVKGANNDDVWNEQPTILNITVHPAPWRSWWAFCLYALCIGTALIALISFLKSKAKLKHKLALESIEKQRNEEINQAKLQFFTNISHEFRTPLTLILGPLQQVLLDYKGSNKVYKKLLVIENSANHLLQLINRLMDFRKLENSQFNLQAAEGNIVKFLKEIYFSFSEYAKNGNYTYTFESESDVINVYYDRSKLERVFYNLISNAFRYTPEGGNITLKITTDSKYIYIDINDSGVGISDEFKTKIFNRFFEVPIHNQPQKNYNKGSGIGLSIAKNIAELHKGTIRLVHKERPGTIFRVSLPLGRGHLQDSEIISDFKLSDDISQYEIQLETLPVLDEDSIEDLITEKEKSTILIVEDHKPLRVFIKNLLKHDYNILEAENGKIALKLAQQNLPSLIISDVIMPEMVGTELCSKIKEDIKTSHIPVVLLTSRSSLIYKFEGLESGADEYISKPFNVKEFRLRIKNILENRMRLKAKFSNAKHITPSEITISSIDEQLLKKAFKIVEDNMANEQFDVLAFSQELGVSRTTLFNKIKAWTNFTPNEFIQEIRLKRAAQLLETNKINISQISYQVGFKSPKYFSKCFQKKFNETPSQYQNRYSEQF.

The signal sequence occupies residues 1 to 20; the sequence is MRNIGVFSVILFSFLAISLK. A helical membrane pass occupies residues 799-819; that stretch reads WAFCLYALCIGTALIALISFL. The Histidine kinase domain maps to 852-1072; that stretch reads NISHEFRTPL…IFRVSLPLGR (221 aa). At His855 the chain carries Phosphohistidine; by autocatalysis. The Response regulatory domain occupies 1119–1234; sequence TILIVEDHKP…EFRLRIKNIL (116 aa). The residue at position 1167 (Asp1167) is a 4-aspartylphosphate. The 100-residue stretch at 1266 to 1365 folds into the HTH araC/xylS-type domain; the sequence is KKAFKIVEDN…NETPSQYQNR (100 aa). 2 consecutive DNA-binding regions (H-T-H motif) follow at residues 1284–1305 and 1332–1355; these read LAFS…KAWT and ISQI…QKKF.

Autophosphorylated. Activation requires a sequential transfer of a phosphate group from a His in the primary transmitter domain, to an Asp in the receiver domain and to a His in the secondary transmitter domain.

The protein resides in the membrane. It localises to the cell surface. The catalysed reaction is ATP + protein L-histidine = ADP + protein N-phospho-L-histidine.. Functionally, histidine kinase probably involved in ulvan degradation. Ulvan is the main polysaccharide component of the Ulvales (green seaweed) cell wall. It is composed of disaccharide building blocks comprising 3-sulfated rhamnose (Rha3S) linked to D-glucuronic acid (GlcA), L-iduronic acid (IduA), or D-xylose (Xyl). This Formosa agariphila (strain DSM 15362 / KCTC 12365 / LMG 23005 / KMM 3901 / M-2Alg 35-1) protein is Histidine kinase P4.